Consider the following 417-residue polypeptide: Ig-like V-type domain-containing protein FAM187A (417 aa).

The first 18 residues, 1 to 18, serve as a signal peptide directing secretion; it reads MSLAHTTVLLWAWGSLQA. The Extracellular portion of the chain corresponds to 19-377; that stretch reads FEIVEKESVF…ASLSDPETRT (359 aa). N-linked (GlcNAc...) asparagine glycosylation is found at asparagine 248 and asparagine 318. The Ig-like V-type domain maps to 268–362; the sequence is PWVPQVPIQF…IAGFRLGVIT (95 aa). An intrachain disulfide couples cysteine 290 to cysteine 346. The chain crosses the membrane as a helical span at residues 378-398; the sequence is AIELTLMGYLLITIFFITIHL. Over 399 to 417 the chain is Cytoplasmic; the sequence is CRCCCQSRCCPNFSAQTLL.

Belongs to the FAM187 family.

The protein resides in the membrane. The polypeptide is Ig-like V-type domain-containing protein FAM187A (Fam187a) (Mus musculus (Mouse)).